The following is a 989-amino-acid chain: Phosphoenolpyruvate carboxylase (989 aa).

Residues His175 and Lys630 contribute to the active site.

The protein belongs to the PEPCase type 1 family. Mg(2+) serves as cofactor.

It catalyses the reaction oxaloacetate + phosphate = phosphoenolpyruvate + hydrogencarbonate. Functionally, forms oxaloacetate, a four-carbon dicarboxylic acid source for the tricarboxylic acid cycle. The protein is Phosphoenolpyruvate carboxylase of Prochlorococcus marinus (strain MIT 9312).